The following is a 424-amino-acid chain: Histidine--tRNA ligase (424 aa).

The protein belongs to the class-II aminoacyl-tRNA synthetase family. As to quaternary structure, homodimer.

The protein resides in the cytoplasm. It catalyses the reaction tRNA(His) + L-histidine + ATP = L-histidyl-tRNA(His) + AMP + diphosphate + H(+). The sequence is that of Histidine--tRNA ligase from Sodalis glossinidius (strain morsitans).